Here is a 394-residue protein sequence, read N- to C-terminus: Phosphoglycerate kinase (394 aa).

Substrate-binding positions include 21–23 (DLN), arginine 36, 59–62 (HLGR), arginine 113, and arginine 146. Residues lysine 197, glutamate 319, and 345–348 (GGDT) contribute to the ATP site.

It belongs to the phosphoglycerate kinase family. As to quaternary structure, monomer.

It is found in the cytoplasm. The enzyme catalyses (2R)-3-phosphoglycerate + ATP = (2R)-3-phospho-glyceroyl phosphate + ADP. It participates in carbohydrate degradation; glycolysis; pyruvate from D-glyceraldehyde 3-phosphate: step 2/5. The polypeptide is Phosphoglycerate kinase (Halorhodospira halophila (strain DSM 244 / SL1) (Ectothiorhodospira halophila (strain DSM 244 / SL1))).